A 256-amino-acid chain; its full sequence is MTNESILESYSGVTPERKKSRMPAKLDWWQSATGLFLGLFMIGHMFFVSTILLGDNVMLWVTKKFELDFIFEGGKPIVVSFLAAFVFAVFIAHAFLAMRKFPINYRQYLTFKTHKDLMRHGDTTLWWIQAMTGFAMFFLGSVHLYIMMTQPQTIGPVSSSFRMVSEWMWPLYLVLLFAVELHGSVGLYRLAVKWGWFDGETPDKTRANLKKLKTLMSAFLIVLGLLTFGAYVKKGLEQTDPNIDYKYFDYKRTHHR.

Residues methionine 1–glutamine 30 lie on the Cytoplasmic side of the membrane. The helical transmembrane segment at serine 31–leucine 52 threads the bilayer. Histidine 44 contacts heme b. The Periplasmic portion of the chain corresponds to leucine 53 to proline 76. The helical transmembrane segment at isoleucine 77–methionine 98 threads the bilayer. Histidine 93 lines the heme b pocket. Over arginine 99 to threonine 124 the chain is Cytoplasmic. Residues leucine 125–threonine 149 form a helical membrane-spanning segment. Histidine 143 serves as a coordination point for heme b. Over glutamine 150 to serine 165 the chain is Periplasmic. A helical transmembrane segment spans residues glutamate 166–tyrosine 188. Heme b is bound at residue histidine 182. The Cytoplasmic segment spans residues arginine 189–arginine 206. A helical transmembrane segment spans residues alanine 207 to alanine 230. Over tyrosine 231 to arginine 256 the chain is Periplasmic.

The protein belongs to the diheme cytochrome b FrdC family. Part of an enzyme complex containing three subunits: a flavoprotein (frdA), an iron-sulfur protein (frdB), and diheme cytochrome b (frdC). Heme b is required as a cofactor.

The protein localises to the cell inner membrane. Its function is as follows. The fumarate reductase enzyme complex is required for fumarate respiration using formate or sulfide as electron donor. This subunit anchors the complex in the membrane and binds a diheme cytochrome b. The chain is Fumarate reductase cytochrome b subunit (frdC) from Wolinella succinogenes (strain ATCC 29543 / DSM 1740 / CCUG 13145 / JCM 31913 / LMG 7466 / NCTC 11488 / FDC 602W) (Vibrio succinogenes).